A 269-amino-acid polypeptide reads, in one-letter code: Eukaryotic translation initiation factor 3 subunit G-1 (269 aa).

One can recognise an RRM domain in the interval 188 to 266 (AAIRISNLSE…LILSVEWSKP (79 aa)).

This sequence belongs to the eIF-3 subunit G family. Component of the eukaryotic translation initiation factor 3 (eIF-3) complex. The eIF-3 complex interacts with pix.

Its subcellular location is the cytoplasm. RNA-binding component of the eukaryotic translation initiation factor 3 (eIF-3) complex, which is involved in protein synthesis of a specialized repertoire of mRNAs and, together with other initiation factors, stimulates binding of mRNA and methionyl-tRNAi to the 40S ribosome. The eIF-3 complex specifically targets and initiates translation of a subset of mRNAs involved in cell proliferation. This subunit can bind 18S rRNA. This chain is Eukaryotic translation initiation factor 3 subunit G-1, found in Drosophila mojavensis (Fruit fly).